The sequence spans 267 residues: Farnesyl diphosphate phosphatase YisP (267 aa).

The protein belongs to the phytoene/squalene synthase family. As to quaternary structure, monomer.

It carries out the reaction (2E,6E)-farnesyl diphosphate + H2O = (2E,6E)-farnesol + diphosphate. Diphosphate release from FPP is inhibited by zaragozic acid. A farnesyl diphosphate (FPP) phosphatase. Involved in biofilm formation, its disruption blocks biofilm synthesis which is restored by exogenous farnesol. Releases diphosphate from FPP, was initally suggested to be a squalene synthase. Diphosphate release is higher from FPP than geranyl pyrophosphate (GPP) or geranylgeranyl pyrophosphate (GGPP). Biofilm synthesis is partially restored by exogenous squalene, beta-carotene or retinol. Required for integrity of cell membrane lipid rafts. Involved in spatial organization of membranes, required for the flotillin-like proteins FloT and FloA to function correctly. The polypeptide is Farnesyl diphosphate phosphatase YisP (yisP) (Bacillus subtilis (strain 168)).